Consider the following 460-residue polypeptide: Cysteine--tRNA ligase (460 aa).

Cys28 serves as a coordination point for Zn(2+). The short motif at Val30 to His40 is the 'HIGH' region element. Zn(2+) is bound by residues Cys209, His234, and Glu238. The 'KMSKS' region motif lies at Lys266–Ser270. ATP is bound at residue Lys269.

Belongs to the class-I aminoacyl-tRNA synthetase family. As to quaternary structure, monomer. Zn(2+) serves as cofactor.

The protein resides in the cytoplasm. The catalysed reaction is tRNA(Cys) + L-cysteine + ATP = L-cysteinyl-tRNA(Cys) + AMP + diphosphate. The polypeptide is Cysteine--tRNA ligase (Shewanella frigidimarina (strain NCIMB 400)).